The primary structure comprises 1594 residues: Calpain-D (1594 aa).

RanBP2-type zinc fingers lie at residues Met-1–Val-35 and Leu-135–Leu-164. Disordered regions lie at residues Glu-210–Asp-256, Glu-371–Gln-400, Ala-420–Gly-459, Lys-524–Glu-543, and Ala-554–Gly-606. Residues His-215–Gly-229 show a composition bias toward basic residues. Composition is skewed to polar residues over residues Arg-246–Ile-255 and Glu-371–Arg-385. Ser-250 carries the phosphoserine modification. Residues Asn-438–Gly-459 show a composition bias toward low complexity. The span at Gln-528–Ser-541 shows a compositional bias: polar residues. A RanBP2-type 3 zinc finger spans residues Arg-643 to Gln-673. The disordered stretch occupies residues Gln-684 to Pro-703. 2 RanBP2-type zinc fingers span residues Arg-704 to Lys-733 and Arg-744 to Pro-774. 2 disordered regions span residues Arg-786–Gly-811 and Ser-860–Val-884. Residues Ser-860–Gly-871 are compositionally biased toward polar residues. The RanBP2-type 6 zinc finger occupies Ser-927–Leu-956. One can recognise a Calpain catalytic domain in the interval Leu-1014 to Arg-1321. Active-site residues include Cys-1079, His-1245, and Asn-1265.

It belongs to the peptidase C2 family.

Its function is as follows. Has a role in eye development. Functionally, calcium-regulated non-lysosomal thiol-protease. This Drosophila melanogaster (Fruit fly) protein is Calpain-D (sol).